The primary structure comprises 1021 residues: Caspase recruitment domain-containing protein 10 (1021 aa).

The tract at residues 1–24 (MQGRADAGEADEEAGAGSGSEAEE) is disordered. Residue S18 is modified to Phosphoserine. The CARD domain occupies 23-115 (EEDALWERIE…EHFTLLTGQE (93 aa)). Residues 138 to 450 (TEVRRLREAR…LEAQLQRTQG (313 aa)) adopt a coiled-coil conformation. Disordered stretches follow at residues 475-544 (EFPS…MSDI), 597-616 (SPPAGLDPQDKSPDSMPGLG), and 790-809 (LVRPKPAGGTAGDSAEQLPA). Basic and acidic residues-rich tracts occupy residues 495-508 (HTSEEATDSEKEIN) and 525-535 (RQREEDPEPPK).

In terms of assembly, CARD10 and BCL10 bind to each other by CARD-CARD interaction. They both participate in a complex with MALT1, where MALT1 binds to BCL10. Interacts with TMEM43; this interaction is essential for EGFR-mediated NF-kappa-B activation. In terms of tissue distribution, highly expressed in kidney, heart followed by brain, lung, liver, skeletal muscle and testis.

Scaffold protein that plays an important role in mediating the activation of NF-kappa-B via BCL10 or EGFR. The sequence is that of Caspase recruitment domain-containing protein 10 (Card10) from Mus musculus (Mouse).